The sequence spans 946 residues: Villin-4 (946 aa).

Gelsolin-like repeat units lie at residues 28–109, 152–219, 274–339, and 641–715; these read NFKP…ETEK, VHVK…EDGK, LEHE…TIMF, and EIHH…PQFF. 2 disordered regions span residues 744 to 783 and 846 to 902; these read ATPS…ERHR and TKST…PAPD. Over residues 765 to 777 the composition is skewed to polar residues; sequence QDKSQQRTRSMSH. Acidic residues predominate over residues 874–883; sequence SENEPEDDEN. One can recognise an HP domain in the interval 881–946; the sequence is DENSTIYPYE…NRLKSDLQLF (66 aa).

It belongs to the villin/gelsolin family.

The protein resides in the cytoplasm. It is found in the cytoskeleton. Its function is as follows. Ca(2+)-regulated actin-binding protein. Binds actin microfilaments (MFs). Involved in actin filament bundling, severing and capping. Caps the barbed end of actin filaments and is able to sever them in a calcium-dependent manner. This is Villin-4 from Oryza sativa subsp. indica (Rice).